A 454-amino-acid chain; its full sequence is Pup--protein ligase (454 aa).

Residue E9 coordinates Mg(2+). Residue R53 coordinates ATP. Y55 serves as a coordination point for Mg(2+). D57 serves as the catalytic Proton acceptor. E63 contacts Mg(2+). ATP contacts are provided by T66 and W420.

This sequence belongs to the Pup ligase/Pup deamidase family. Pup-conjugating enzyme subfamily.

The enzyme catalyses ATP + [prokaryotic ubiquitin-like protein]-L-glutamate + [protein]-L-lysine = ADP + phosphate + N(6)-([prokaryotic ubiquitin-like protein]-gamma-L-glutamyl)-[protein]-L-lysine.. Its pathway is protein degradation; proteasomal Pup-dependent pathway. It participates in protein modification; protein pupylation. Functionally, catalyzes the covalent attachment of the prokaryotic ubiquitin-like protein modifier Pup to the proteasomal substrate proteins, thereby targeting them for proteasomal degradation. This tagging system is termed pupylation. The ligation reaction involves the side-chain carboxylate of the C-terminal glutamate of Pup and the side-chain amino group of a substrate lysine. This is Pup--protein ligase from Arthrobacter sp. (strain FB24).